A 207-amino-acid chain; its full sequence is Outer-membrane lipoprotein LolB (207 aa).

An N-terminal signal peptide occupies residues 1–21 (MPLPDFRLIRLLPLAALVLTA). Residue cysteine 22 is the site of N-palmitoyl cysteine attachment. Cysteine 22 carries S-diacylglycerol cysteine lipidation.

Belongs to the LolB family. As to quaternary structure, monomer.

The protein resides in the cell outer membrane. Its function is as follows. Plays a critical role in the incorporation of lipoproteins in the outer membrane after they are released by the LolA protein. This is Outer-membrane lipoprotein LolB from Escherichia coli (strain K12 / MC4100 / BW2952).